Here is a 427-residue protein sequence, read N- to C-terminus: UPF0229 protein YeaH (427 aa).

The interval 87-110 is disordered; that stretch reads RIERSQGGGGGSGSGQGQASQDGE. Positions 92–102 are enriched in gly residues; that stretch reads QGGGGGSGSGQ.

It belongs to the UPF0229 family.

This chain is UPF0229 protein YeaH, found in Escherichia coli O6:K15:H31 (strain 536 / UPEC).